A 323-amino-acid chain; its full sequence is Glyoxylate/hydroxypyruvate reductase HPR3 (323 aa).

NADP(+) contacts are provided by residues 160–163 (LGSI), 182–184 (SRS), and 238–240 (VGR). Catalysis depends on residues Arg-240 and Glu-269. The active-site Proton donor is the His-287. 287 to 289 (HFA) provides a ligand contact to NADP(+).

Belongs to the D-isomer specific 2-hydroxyacid dehydrogenase family. GyaR subfamily. Homodimer.

The enzyme catalyses glycolate + NADP(+) = glyoxylate + NADPH + H(+). It catalyses the reaction (R)-glycerate + NADP(+) = 3-hydroxypyruvate + NADPH + H(+). Inhibited by oxalate. In terms of biological role, catalyzes the NADPH-dependent reduction of glyoxylate and hydroxypyruvate (HP) into glycolate and glycerate. Mostly active in the presence of NADPH and glyoxylate. The sequence is that of Glyoxylate/hydroxypyruvate reductase HPR3 (HPR3) from Arabidopsis thaliana (Mouse-ear cress).